A 290-amino-acid polypeptide reads, in one-letter code: HTH-type transcriptional regulator BudR (290 aa).

The HTH lysR-type domain occupies 1 to 58 (MELRYLRYFVAVAEARNFTRAAHDLGISQPPLSQQIQRLEREIGTPLLRRLTRGVELT). The segment at residues 18–37 (FTRAAHDLGISQPPLSQQIQ) is a DNA-binding region (H-T-H motif).

It belongs to the LysR transcriptional regulatory family.

Regulator of the budABC operon for 2,3-butanediol synthesis. The chain is HTH-type transcriptional regulator BudR (budR) from Raoultella terrigena (Klebsiella terrigena).